Reading from the N-terminus, the 225-residue chain is Uridylate kinase (225 aa).

Position 9–10 (9–10 (GS)) interacts with ATP. Gly44 serves as a coordination point for UMP. Residues Gly45 and Arg49 each coordinate ATP. UMP is bound by residues Asp66 and 114–120 (THPGHTT). ATP is bound by residues Thr140, Asn141, Tyr146, and Asp149.

It belongs to the UMP kinase family. In terms of assembly, homohexamer.

It localises to the cytoplasm. It carries out the reaction UMP + ATP = UDP + ADP. It participates in pyrimidine metabolism; CTP biosynthesis via de novo pathway; UDP from UMP (UMPK route): step 1/1. Inhibited by UTP. Catalyzes the reversible phosphorylation of UMP to UDP. In Pyrococcus abyssi (strain GE5 / Orsay), this protein is Uridylate kinase.